We begin with the raw amino-acid sequence, 386 residues long: CUE domain-containing protein 1 (386 aa).

The span at 1 to 10 (MTSLFRRSSS) shows a compositional bias: low complexity. A disordered region spans residues 1 to 40 (MTSLFRRSSSGSGGGGTAGARGGGGGTAAPQELNNSRPAR). The segment covering 11–27 (GSGGGGTAGARGGGGGT) has biased composition (gly residues). Residues 46–89 (EFNQAMDDFKTMFPNMDYDIIECVLRANSGAVDATIDQLLQMNL) form the CUE domain. Disordered stretches follow at residues 147 to 172 (LAPP…RYRN), 195 to 225 (SIQG…DQES), and 367 to 386 (DFRG…REGQ). Residues 199–209 (NAGGPKPGSGE) are compositionally biased toward gly residues.

The polypeptide is CUE domain-containing protein 1 (CUEDC1) (Homo sapiens (Human)).